Reading from the N-terminus, the 208-residue chain is Large ribosomal subunit protein bL25 (208 aa).

It belongs to the bacterial ribosomal protein bL25 family. CTC subfamily. In terms of assembly, part of the 50S ribosomal subunit; part of the 5S rRNA/L5/L18/L25 subcomplex. Contacts the 5S rRNA. Binds to the 5S rRNA independently of L5 and L18.

Its function is as follows. This is one of the proteins that binds to the 5S RNA in the ribosome where it forms part of the central protuberance. The protein is Large ribosomal subunit protein bL25 of Syntrophotalea carbinolica (strain DSM 2380 / NBRC 103641 / GraBd1) (Pelobacter carbinolicus).